The chain runs to 379 residues: Cytochrome b (379 aa).

4 helical membrane passes run 33 to 53, 77 to 98, 113 to 133, and 178 to 198; these read FGSL…FLAM, WLIR…FIHV, WNIG…GYVL, and FFAF…VHLL. Positions 83 and 97 each coordinate heme b. Residues His-182 and His-196 each contribute to the heme b site. His-201 is an a ubiquinone binding site. 4 helical membrane passes run 226 to 246, 288 to 308, 320 to 340, and 347 to 367; these read TKDL…ALFF, LGGV…PLLN, ITQV…WIGG, and FTMI…ILIP.

This sequence belongs to the cytochrome b family. As to quaternary structure, the cytochrome bc1 complex contains 11 subunits: 3 respiratory subunits (MT-CYB, CYC1 and UQCRFS1), 2 core proteins (UQCRC1 and UQCRC2) and 6 low-molecular weight proteins (UQCRH/QCR6, UQCRB/QCR7, UQCRQ/QCR8, UQCR10/QCR9, UQCR11/QCR10 and a cleavage product of UQCRFS1). This cytochrome bc1 complex then forms a dimer. It depends on heme b as a cofactor.

Its subcellular location is the mitochondrion inner membrane. Functionally, component of the ubiquinol-cytochrome c reductase complex (complex III or cytochrome b-c1 complex) that is part of the mitochondrial respiratory chain. The b-c1 complex mediates electron transfer from ubiquinol to cytochrome c. Contributes to the generation of a proton gradient across the mitochondrial membrane that is then used for ATP synthesis. The protein is Cytochrome b (MT-CYB) of Akodon spegazzinii (Spegazzini's grass mouse).